Reading from the N-terminus, the 104-residue chain is MYAIVKTGGKQYKVAEGDVIEVEKLAGTPGDAVQLAAVLLVDGDDLVTDAAKLAKVEVSGEIAAHTKGPKIRIHKFKNKTGYHKRQGHRQPLTQVKVTGISSGK.

This sequence belongs to the bacterial ribosomal protein bL21 family. Part of the 50S ribosomal subunit. Contacts protein L20.

This protein binds to 23S rRNA in the presence of protein L20. The polypeptide is Large ribosomal subunit protein bL21 (Salinispora tropica (strain ATCC BAA-916 / DSM 44818 / JCM 13857 / NBRC 105044 / CNB-440)).